Consider the following 449-residue polypeptide: MFQTINEISIHPELYNQKKVLIQGWITNIRGNLKIIFVELNDGSSFKNLQCVLKKEFIDFDKIENLALGVAVEISGIFSNTPERQQFGEVLVETLEIKGNNYNTNFPIQNQEISLEVLRQMPHFRHRSRLFRAIMKLRSALFFEIHKFFRRQGFINFSAPILTSNDGEGAGEVFIVDDENKDFFNKKTTLGVTGQLHAEAYALGFKKVYTFAPTFRAERSNTRRHAAEFWMIEPEVAFFTLEQIIELAVKLLQKVIKSVIIRNKDEFIFLEKAGDKNLRKRLLQFCDSQVTQISYEKAIELLLEHQEKFEEKDLFFGCDLKTEHERFLTEEIFHMPVVIINYPKNLKAFYMHQNEDGQTVAAFDLLVPGIGELIGGSQREVRYEKLLARMNELNMNIEEFQWYLDLRKYGNPGSSGFGLGFERLLMYITGIENIRDVIPFPRTNKNILM.

Belongs to the class-II aminoacyl-tRNA synthetase family. As to quaternary structure, homodimer.

It is found in the cytoplasm. It catalyses the reaction tRNA(Asn) + L-asparagine + ATP = L-asparaginyl-tRNA(Asn) + AMP + diphosphate + H(+). The polypeptide is Asparagine--tRNA ligase (Mesomycoplasma hyopneumoniae (strain 7448) (Mycoplasma hyopneumoniae)).